The sequence spans 450 residues: Cytidylate cyclase (450 aa).

A Guanylate cyclase domain is found at 97–236 (VTMFVDIRKS…LPVDMTAKLQ (140 aa)). An a ribonucleoside 5'-triphosphate-binding site is contributed by phenylalanine 100. The Mn(2+) site is built by aspartate 102, isoleucine 103, and aspartate 146. An AGS-C domain region spans residues 318–450 (PNQFNFECFV…YRNIIGVYIK (133 aa)).

This sequence belongs to the adenylyl cyclase class-4/guanylyl cyclase family. Pyrimidine cyclase subfamily. In terms of assembly, homodimer. Mn(2+) is required as a cofactor.

It is found in the cytoplasm. The enzyme catalyses CTP = 3',5'-cyclic CMP + diphosphate. In E.coli strain MG1655 transformed with both genes cCMP appears between 15 and 30 minutes after infection with phage T5 (at protein level). No cCMP accumulates in uninfected cells. Its function is as follows. Pycsar (pyrimidine cyclase system for antiphage resistance) provides immunity against bacteriophage. The pyrimidine cyclase (PycC) synthesizes cyclic nucleotides in response to infection; these serve as specific second messenger signals. The signal activates the adjacent effector, leading to bacterial cell death and abortive phage infection. A clade E Pycsar system. The pyrimidine cyclase gene of a two-gene Pycsar system, generates cyclic CMP (cCMP) from CTP in response to bacteriophage infection. Has little to no activity on ATP, GTP or UTP. Expression of this and adjacent effector EcPycTM (AC P0DV25) confers resistance to bacteriophage P1 and T5; expression of this gene alone does not confer resistance. When cells expressing the Pycsar system are infected by phage T5 at low multiplicity of infection (0.2 MOI) the culture survives, at 2.0 MOI bacteria enter growth arrest. The same cells enter growth arrest after exposure to 250 uM cCMP but not cUMP; thus the effector protein responds only to the cNMP produced by its cognate NTP cyclase. Some of the cells treated with cCMP have abnormal membrane protrusions. The sequence is that of Cytidylate cyclase from Escherichia coli.